Consider the following 191-residue polypeptide: Divergent paired-related homeobox (191 aa).

Residues 1–15 are compositionally biased toward basic and acidic residues; the sequence is MPGSEDLRKGKDQMH. A disordered region spans residues 1 to 20; that stretch reads MPGSEDLRKGKDQMHSHRKR. The homeobox DNA-binding region spans 16 to 75; it reads SHRKRTMFTKKQLEDLNILFNENPYPNPSLQKEMASKIDIHPTVLQVWFKNHRAKLKKAK.

It belongs to the paired homeobox family.

It is found in the nucleus. Transcription factor that acts as a repressor. In Homo sapiens (Human), this protein is Divergent paired-related homeobox.